The chain runs to 2194 residues: Supervillin (2194 aa).

Residues 1-174 form an interaction with MYLK region; that stretch reads MKRKERIARR…SSYSRTELSG (174 aa). Disordered regions lie at residues 35–98, 118–335, 388–414, 450–500, 513–563, 589–667, 685–719, and 739–791; these read LEED…TQSL, EKYG…QRRH, PESI…KVLE, EDRG…TERM, AVSQ…QTSK, RASR…KVDE, KSFD…QPVT, and HPVM…DSST. Ser-50 carries the post-translational modification Phosphoserine. Positions 87–98 are enriched in polar residues; it reads PYSSGIMDTQSL. Composition is skewed to basic and acidic residues over residues 139–161 and 181–192; these read SRKD…ESSR and ESKDYGLHRSDG. Phosphoserine is present on residues Ser-245 and Ser-262. Composition is skewed to basic and acidic residues over residues 283-294 and 308-319; these read PKHEWFLQKDSE and KVREKLVREESA. Polar residues predominate over residues 320–330; the sequence is RSSPELTSESL. A phosphoserine mark is found at Ser-321 and Ser-322. Positions 455-467 are enriched in polar residues; that stretch reads GRSQEAPSGTEDL. Residues 540–551 are compositionally biased toward low complexity; sequence PPQLQALKAKAP. Composition is skewed to basic and acidic residues over residues 592 to 615 and 626 to 635; these read RKPE…ERGS and ENRKTSERFR. Phosphoserine occurs at positions 652 and 686. Residues 704–714 are compositionally biased toward basic and acidic residues; the sequence is QRLRRLQDRSH. A phosphoserine mark is found at Ser-747 and Ser-781. Over residues 770 to 782 the composition is skewed to basic and acidic residues; sequence LARDQTNESKDSA. Position 829 is a phosphotyrosine (Tyr-829). Thr-831 carries the post-translational modification Phosphothreonine. 6 positions are modified to phosphoserine: Ser-893, Ser-899, Ser-903, Ser-947, Ser-979, and Ser-1031. A disordered region spans residues 1036 to 1077; it reads EFGEPTSEQTGAAAGKPAAPTATPVSWKPQDPSEQPQEKRYQ. Residues 1045-1059 are compositionally biased toward low complexity; sequence TGAAAGKPAAPTATP. A phosphoserine mark is found at Ser-1099 and Ser-1205. Thr-1210 bears the Phosphothreonine mark. Phosphoserine occurs at positions 1214, 1302, and 1385. The tract at residues 1399–1667 is interaction with NEB; that stretch reads SNVSLRSVNL…KFLDWTELKR (269 aa). 5 Gelsolin-like repeats span residues 1421–1520, 1540–1662, 1732–1842, 1861–1962, and 1995–2102; these read KKLM…LGGQ, IETN…FLDW, ISVD…FQGG, WRLY…LGRR, and ATEF…FPSW. The region spanning 2131–2194 is the HP domain; that stretch reads KLCKTIYPLA…VNLKKAKGLF (64 aa).

Belongs to the villin/gelsolin family. In terms of assembly, associates with F-actin. Interacts with NEB. Interacts with MYH9. Interacts with MYLK. Interacts with TASOR. As to quaternary structure, interacts with TRIP6 and DYNLT1. Interacts with KIF14; at midbody during cytokinesis.

The protein localises to the cell membrane. It localises to the cytoplasm. Its subcellular location is the cytoskeleton. The protein resides in the cell projection. It is found in the invadopodium. The protein localises to the podosome. It localises to the midbody. Its subcellular location is the cleavage furrow. Forms a high-affinity link between the actin cytoskeleton and the membrane. Is among the first costameric proteins to assemble during myogenesis and it contributes to myogenic membrane structure and differentiation. Appears to be involved in myosin II assembly. May modulate myosin II regulation through MLCK during cell spreading, an initial step in cell migration. May play a role in invadopodial function. In terms of biological role, may be involved in modulation of focal adhesions. Supervillin-mediated down-regulation of focal adhesions involves binding to TRIP6. Plays a role in cytokinesis through KIF14 interaction. In Bos taurus (Bovine), this protein is Supervillin.